The primary structure comprises 191 residues: tRNA-specific adenosine deaminase 2 (191 aa).

In terms of domain architecture, CMP/dCMP-type deaminase spans 20-145; that stretch reads EETEKWMEEA…SVLNIASADL (126 aa). Zn(2+) is bound at residue H71. Residue E73 is the Proton donor of the active site. The Zn(2+) site is built by C107 and C110.

Belongs to the cytidine and deoxycytidylate deaminase family. ADAT2 subfamily. It depends on Zn(2+) as a cofactor.

It carries out the reaction adenosine(34) in tRNA + H2O + H(+) = inosine(34) in tRNA + NH4(+). In terms of biological role, probably participates in deamination of adenosine-34 to inosine in many tRNAs. In Homo sapiens (Human), this protein is tRNA-specific adenosine deaminase 2 (ADAT2).